A 214-amino-acid polypeptide reads, in one-letter code: Calcineurin B homologous protein 3 (214 aa).

Gly2 carries N-myristoyl glycine lipidation. One can recognise an EF-hand domain in the interval 110 to 145 (FRKEKLKFLFHMYDADYDGIITLQEYKNVLDELMSG). 4 residues coordinate Ca(2+): Asp123, Asp125, Asp127, and Glu134.

Belongs to the calcineurin regulatory subunit family. CHP subfamily. Monomer. Homodimer. As to expression, expressed in the bipotential gonad by E4.5 and expressed in both the testis and ovary by E5.5, but with expression higher in the testis. Expressed in the testis cords but also at low levels in the interstitium. In the ovary, expression is principally in the ovarian cortex, but also in the medulla. Also expressed in the embryonic brain, with expression highest in the region between the nasal placode and olfactory bulb. Also expressed in the embryonic heart and tail.

Its subcellular location is the nucleus. It localises to the cytoplasm. It is found in the membrane. The protein localises to the cell membrane. The protein resides in the cell projection. Its subcellular location is the lamellipodium. It localises to the ruffle membrane. In terms of biological role, functions as an integral cofactor in cell pH regulation by controlling plasma membrane-type Na(+)/H(+) exchange activity. Promotes the induction of hematopoietic stem cell differentiation toward megakaryocytic lineage. Essential for the coupling of ERK cascade activation with the expression of ETS family genes in megakaryocytic differentiation. Also involved in granulocytic differentiation in a ERK-dependent manner. Inhibits the phosphatase activity of calcineurin. The sequence is that of Calcineurin B homologous protein 3 from Gallus gallus (Chicken).